The primary structure comprises 512 residues: Probable cytosol aminopeptidase (512 aa).

Mn(2+) is bound by residues lysine 281 and aspartate 286. Lysine 293 is an active-site residue. Mn(2+) is bound by residues aspartate 304, aspartate 363, and glutamate 365. Residue arginine 367 is part of the active site.

It belongs to the peptidase M17 family. Requires Mn(2+) as cofactor.

The protein resides in the cytoplasm. The catalysed reaction is Release of an N-terminal amino acid, Xaa-|-Yaa-, in which Xaa is preferably Leu, but may be other amino acids including Pro although not Arg or Lys, and Yaa may be Pro. Amino acid amides and methyl esters are also readily hydrolyzed, but rates on arylamides are exceedingly low.. It catalyses the reaction Release of an N-terminal amino acid, preferentially leucine, but not glutamic or aspartic acids.. Presumably involved in the processing and regular turnover of intracellular proteins. Catalyzes the removal of unsubstituted N-terminal amino acids from various peptides. The polypeptide is Probable cytosol aminopeptidase (Koribacter versatilis (strain Ellin345)).